A 123-amino-acid polypeptide reads, in one-letter code: Large ribosomal subunit protein uL14 (123 aa).

The protein belongs to the universal ribosomal protein uL14 family. In terms of assembly, part of the 50S ribosomal subunit. Forms a cluster with proteins L3 and L19. In the 70S ribosome, L14 and L19 interact and together make contacts with the 16S rRNA in bridges B5 and B8.

In terms of biological role, binds to 23S rRNA. Forms part of two intersubunit bridges in the 70S ribosome. The chain is Large ribosomal subunit protein uL14 from Enterobacter sp. (strain 638).